Here is a 227-residue protein sequence, read N- to C-terminus: Holliday junction branch migration complex subunit RuvA (227 aa).

A domain I region spans residues 1 to 64 (MFESISGILT…EDALRLFGFS (64 aa)). Positions 65–143 (NVQERTLFLS…LTDAASCAQS (79 aa)) are domain II. The flexible linker stretch occupies residues 144-158 (QTDDRAAHPSNLGCA). Residues 159–227 (PHAREIEDLV…HPHAVAPAAE (69 aa)) form a domain III region.

The protein belongs to the RuvA family. Homotetramer. Forms an RuvA(8)-RuvB(12)-Holliday junction (HJ) complex. HJ DNA is sandwiched between 2 RuvA tetramers; dsDNA enters through RuvA and exits via RuvB. An RuvB hexamer assembles on each DNA strand where it exits the tetramer. Each RuvB hexamer is contacted by two RuvA subunits (via domain III) on 2 adjacent RuvB subunits; this complex drives branch migration. In the full resolvosome a probable DNA-RuvA(4)-RuvB(12)-RuvC(2) complex forms which resolves the HJ.

It localises to the cytoplasm. Its function is as follows. The RuvA-RuvB-RuvC complex processes Holliday junction (HJ) DNA during genetic recombination and DNA repair, while the RuvA-RuvB complex plays an important role in the rescue of blocked DNA replication forks via replication fork reversal (RFR). RuvA specifically binds to HJ cruciform DNA, conferring on it an open structure. The RuvB hexamer acts as an ATP-dependent pump, pulling dsDNA into and through the RuvAB complex. HJ branch migration allows RuvC to scan DNA until it finds its consensus sequence, where it cleaves and resolves the cruciform DNA. The sequence is that of Holliday junction branch migration complex subunit RuvA from Treponema pallidum (strain Nichols).